The primary structure comprises 301 residues: Probable alpha-L-glutamate ligase (301 aa).

Positions 104–287 (LQLLSRKGIG…VADEIIRFIE (184 aa)) constitute an ATP-grasp domain. ATP contacts are provided by residues Lys-141, 178-179 (EF), Asp-187, and 211-213 (RSN). Residues Asp-248, Glu-260, and Asn-262 each coordinate Mg(2+). Mn(2+) contacts are provided by Asp-248, Glu-260, and Asn-262.

Belongs to the RimK family. The cofactor is Mg(2+). It depends on Mn(2+) as a cofactor.

This chain is Probable alpha-L-glutamate ligase, found in Syntrophotalea carbinolica (strain DSM 2380 / NBRC 103641 / GraBd1) (Pelobacter carbinolicus).